An 82-amino-acid polypeptide reads, in one-letter code: Probable 26S proteasome complex subunit dss-1 (82 aa).

Positions 56–82 (NWDDETHESEFSKQLKEELRKSGHQVA) are disordered. Positions 63-76 (ESEFSKQLKEELRK) are enriched in basic and acidic residues.

Belongs to the DSS1/SEM1 family. In terms of assembly, part of the 26S proteasome. In terms of tissue distribution, expressed in intestinal epithelium and head neurons.

The protein localises to the nucleus. It localises to the cytoplasm. In terms of biological role, subunit of the 26S proteasome which plays a role in ubiquitin-dependent proteolysis. Has an essential role in oogenesis and larval growth. Required for intestinal function and default lifespan. The sequence is that of Probable 26S proteasome complex subunit dss-1 (dss-1) from Caenorhabditis elegans.